The following is a 234-amino-acid chain: Transcription factor bHLH160 (234 aa).

Positions Met-1–Ser-13 are enriched in polar residues. Residues Met-1 to Ala-67 are disordered. Basic and acidic residues predominate over residues Ile-27–Thr-37. The bHLH domain occupies Ala-60–Leu-115.

Belongs to the bHLH protein family.

Its subcellular location is the nucleus. This chain is Transcription factor bHLH160, found in Arabidopsis thaliana (Mouse-ear cress).